A 511-amino-acid polypeptide reads, in one-letter code: Histidine ammonia-lyase (511 aa).

A cross-link (5-imidazolinone (Ala-Gly)) is located at residues 142 to 144 (ASG). Residue S143 is modified to 2,3-didehydroalanine (Ser).

It belongs to the PAL/histidase family. Post-translationally, contains an active site 4-methylidene-imidazol-5-one (MIO), which is formed autocatalytically by cyclization and dehydration of residues Ala-Ser-Gly.

The protein resides in the cytoplasm. It catalyses the reaction L-histidine = trans-urocanate + NH4(+). Its pathway is amino-acid degradation; L-histidine degradation into L-glutamate; N-formimidoyl-L-glutamate from L-histidine: step 1/3. This is Histidine ammonia-lyase from Chelativorans sp. (strain BNC1).